A 682-amino-acid chain; its full sequence is Protein SYG1 homolog (682 aa).

The SPX domain occupies 1–219 (MKFGKVIEGQ…HTDLQGFWVD (219 aa)). Residues 1 to 274 (MKFGKVIEGQ…KEHFSANSMR (274 aa)) lie on the Cytoplasmic side of the membrane. A helical transmembrane segment spans residues 275–295 (FGLLFGAGLPLAIEAACYYNA). The Extracellular segment spans residues 296-300 (TEQSS). Residues 301 to 321 (YLLQIWGGFFLVIFAFVLFDL) traverse the membrane as a helical segment. The Cytoplasmic portion of the chain corresponds to 322–348 (DCYVWEKTRVNYMLIFEFNQRKSLNWR). Residues 349–369 (QHLEIVGAVFFIFSLFFFLCM) traverse the membrane as a helical segment. The Extracellular segment spans residues 370-377 (RNFFPGFT). A helical membrane pass occupies residues 378 to 398 (IYFPALFLGVVGTFLIAPVIV). The Cytoplasmic segment spans residues 399–406 (PYWRMRRY). The helical transmembrane segment at 407-424 (LIIQLIRVFLSGLSTVHF) threads the bilayer. Topologically, residues 425–426 (QD) are extracellular. The helical transmembrane segment at 427–447 (FFFADQMVSLTYACGNISLFF) threads the bilayer. Topologically, residues 448 to 525 (CLYKRLWRQP…WRIHPGLKYR (78 aa)) are cytoplasmic. The region spanning 459–654 (LCNSSHSPLL…VKPHSDVFVS (196 aa)) is the EXS domain. The chain crosses the membrane as a helical span at residues 526–546 (VLYTIFAGVNSLFSYTWDILM). The Extracellular portion of the chain corresponds to 547–571 (DWNLLVRKDGRWQFREHRILKQLWP). The chain crosses the membrane as a helical span at residues 572-592 (YIIAMILNFIVRSSFIFYCIF). At 593–682 (PNHIQHSSGI…QTDVDEAQFS (90 aa)) the chain is on the cytoplasmic side. A disordered region spans residues 659–682 (SDKNYTDDEDSMDDQTDVDEAQFS). A compositionally biased stretch (acidic residues) spans 665 to 682 (DDEDSMDDQTDVDEAQFS).

The protein belongs to the SYG1 (TC 2.A.94) family.

It is found in the cell membrane. Functionally, may function in G-protein coupled signal transduction. This is Protein SYG1 homolog from Schizosaccharomyces pombe (strain 972 / ATCC 24843) (Fission yeast).